Reading from the N-terminus, the 155-residue chain is Antitoxin HicB 1 (155 aa).

The HTH cro/C1-type domain maps to 99–153 (MLNAFLDSKLTQIELANRMGVKKQEVTRIFDLRHSTKIDTVGKVASAIGHQLTLS). Residues 110-129 (QIELANRMGVKKQEVTRIFD) constitute a DNA-binding region (H-T-H motif).

This sequence belongs to the HicB antitoxin family. Probably forms a complex with the probable mRNA interferase HicA1 (its cognate toxin); when complexed with HicA 1 inhibits the toxin activity.

Its function is as follows. Antitoxin component of a type II toxin-antitoxin (TA) system. Functions as an mRNA interferase antitoxin preventing effects of the HicA 1 toxin. The chain is Antitoxin HicB 1 (hicB1) from Photorhabdus laumondii subsp. laumondii (strain DSM 15139 / CIP 105565 / TT01) (Photorhabdus luminescens subsp. laumondii).